The following is a 150-amino-acid chain: Large ribosomal subunit protein bL9 (150 aa).

This sequence belongs to the bacterial ribosomal protein bL9 family.

In terms of biological role, binds to the 23S rRNA. The sequence is that of Large ribosomal subunit protein bL9 from Acidovorax ebreus (strain TPSY) (Diaphorobacter sp. (strain TPSY)).